Reading from the N-terminus, the 123-residue chain is uncharacterized protein (123 aa).

A disordered region spans residues 17 to 74 (FQKKKKTGSQTRRTLKPQPQQLQQNLPKGHETTGHTYERVLQQQGSQERSPGLMSEDS). A Phosphothreonine modification is found at Thr-30. Positions 32-43 (KPQPQQLQQNLP) are enriched in low complexity. Residues 44 to 54 (KGHETTGHTYE) show a composition bias toward basic and acidic residues. Ser-62 bears the Phosphoserine mark.

This is an uncharacterized protein from Homo sapiens (Human).